The chain runs to 278 residues: MGSPVFRRPFCHLSTYSLLWAIAAVALSTAQVEVVTQDERKLLHTTASLRCSLKTTQEPLIVTWQKKKAVGPENMVTYSKAHGVVIQPTYKDRINITELGLLNTSITFWNTTLDDEGCYMCLFNMFGSGKVSGTACLTLYVQPIVHLHYNYFEDHLNITCSATARPAPAISWKGTGSGIENSTESHSHSNGTTSVTSILRVKDPKTQVGKEVICQVLYLGNVIDYKQSLDKGFWFSVPLLLSIVSLVILLVLISILLYWKRHRNQERGESSQGMQRMK.

The N-terminal stretch at 1-30 (MGSPVFRRPFCHLSTYSLLWAIAAVALSTA) is a signal peptide. The region spanning 31–141 (QVEVVTQDER…SGTACLTLYV (111 aa)) is the Ig-like V-type domain. Residues 31–232 (QVEVVTQDER…IDYKQSLDKG (202 aa)) are Extracellular-facing. Cystine bridges form between C51-C121 and C118-C136. Residues N95, N103, and N110 are each glycosylated (N-linked (GlcNAc...) asparagine). In terms of domain architecture, Ig-like C2-type spans 142-232 (QPIVHLHYNY…IDYKQSLDKG (91 aa)). 3 N-linked (GlcNAc...) asparagine glycosylation sites follow: N157, N181, and N190. Cysteines 160 and 214 form a disulfide. The helical transmembrane segment at 233-259 (FWFSVPLLLSIVSLVILLVLISILLYW) threads the bilayer. Topologically, residues 260–278 (KRHRNQERGESSQGMQRMK) are cytoplasmic.

In terms of assembly, CD200 and CD200R1 interact via their respective N-terminal Ig-like domains. Found on the surface of neurons, thymocytes, B-cells and follicular dendritic cells.

The protein localises to the cell membrane. Costimulates T-cell proliferation. May regulate myeloid cell activity in a variety of tissues. The sequence is that of OX-2 membrane glycoprotein (Cd200) from Rattus norvegicus (Rat).